Here is a 302-residue protein sequence, read N- to C-terminus: Glutaminase (302 aa).

Positions 61, 111, 155, 162, 186, 238, and 256 each coordinate substrate.

It belongs to the glutaminase family. Homotetramer.

It carries out the reaction L-glutamine + H2O = L-glutamate + NH4(+). The sequence is that of Glutaminase from Stutzerimonas stutzeri (strain A1501) (Pseudomonas stutzeri).